We begin with the raw amino-acid sequence, 154 residues long: Ascorbate-specific PTS system EIIA component (154 aa).

The PTS EIIA type-2 domain occupies 6-150; it reads SLAENNSIRL…QEVLDLIDRT (145 aa). Residue H68 is the Tele-phosphohistidine intermediate of the active site. Position 68 is a phosphohistidine (H68).

It is found in the cytoplasm. In terms of biological role, the phosphoenolpyruvate-dependent sugar phosphotransferase system (sugar PTS), a major carbohydrate active transport system, catalyzes the phosphorylation of incoming sugar substrates concomitantly with their translocation across the cell membrane. The enzyme II UlaABC PTS system is involved in ascorbate transport. The sequence is that of Ascorbate-specific PTS system EIIA component (ulaC) from Salmonella typhi.